The following is a 124-amino-acid chain: Large ribosomal subunit protein bL12 (124 aa).

Belongs to the bacterial ribosomal protein bL12 family. As to quaternary structure, homodimer. Part of the ribosomal stalk of the 50S ribosomal subunit. Forms a multimeric L10(L12)X complex, where L10 forms an elongated spine to which 2 to 4 L12 dimers bind in a sequential fashion. Binds GTP-bound translation factors.

Forms part of the ribosomal stalk which helps the ribosome interact with GTP-bound translation factors. Is thus essential for accurate translation. The sequence is that of Large ribosomal subunit protein bL12 from Burkholderia lata (strain ATCC 17760 / DSM 23089 / LMG 22485 / NCIMB 9086 / R18194 / 383).